Here is a 223-residue protein sequence, read N- to C-terminus: Neurotrophic factor BDNF precursor form (223 aa).

Residues 1–5 (SCMKA) form the signal peptide. Residues 6–114 (APMKEVSIRG…AANMSMRVRR (109 aa)) constitute a propeptide that is removed on maturation. N107 carries an N-linked (GlcNAc...) asparagine glycan. 2 cysteine pairs are disulfide-bonded: C127–C194 and C172–C223.

The protein belongs to the NGF-beta family.

It localises to the secreted. Promotes the survival of neuronal populations that are all located either in the central nervous system or directly connected to it. This Candoia carinata (Papuan tree boa) protein is Neurotrophic factor BDNF precursor form (BDNF).